The following is a 1295-amino-acid chain: Phosphoribosylformylglycinamidine synthase (1295 aa).

Residues 305 to 327 (WPGAATGSGGEIRDEGATGRGAK) form a disordered region. Residues 307 to 318 (GAATGSGGEIRD), 386 to 388 (TGY), and alanine 678 each bind ATP. Aspartate 679, glutamate 718, asparagine 722, and aspartate 884 together coordinate Mg(2+). Serine 886 is an ATP binding site. Positions 1041–1295 (KVAVLREQGG…IFRNARKQLG (255 aa)) constitute a Glutamine amidotransferase type-1 domain. Cysteine 1135 serves as the catalytic Nucleophile. Residues histidine 1260 and glutamate 1262 contribute to the active site.

It in the N-terminal section; belongs to the FGAMS family. As to quaternary structure, monomer.

The protein resides in the cytoplasm. It catalyses the reaction N(2)-formyl-N(1)-(5-phospho-beta-D-ribosyl)glycinamide + L-glutamine + ATP + H2O = 2-formamido-N(1)-(5-O-phospho-beta-D-ribosyl)acetamidine + L-glutamate + ADP + phosphate + H(+). Its pathway is purine metabolism; IMP biosynthesis via de novo pathway; 5-amino-1-(5-phospho-D-ribosyl)imidazole from N(2)-formyl-N(1)-(5-phospho-D-ribosyl)glycinamide: step 1/2. Its function is as follows. Phosphoribosylformylglycinamidine synthase involved in the purines biosynthetic pathway. Catalyzes the ATP-dependent conversion of formylglycinamide ribonucleotide (FGAR) and glutamine to yield formylglycinamidine ribonucleotide (FGAM) and glutamate. The sequence is that of Phosphoribosylformylglycinamidine synthase from Salmonella choleraesuis (strain SC-B67).